We begin with the raw amino-acid sequence, 112 residues long: Protein preY, mitochondrial (112 aa).

A mitochondrion-targeting transit peptide spans 1 to 34 (MLTTTCRRLSQALQRPHALSAVAQRCLRAPGARS). Residues 49–95 (HPALLQFLVCPLSKKPLRYDASTNELINDELGIAYPIIDGVPNMIPQ) enclose the TRM112 domain.

Belongs to the PREY family. As to quaternary structure, interacts (via TRM112 domain) with NDUFAF5; the interaction is direct and stabilizes NDUFAF5 protein. Interacts with COQ5; the interaction is direct, stabilizes COQ5 protein and associates PYURF with COQ enzyme complex.

The protein localises to the mitochondrion. Its function is as follows. In mitochondria, S-adenosylmethionine-dependent methyltransferase chaperone that supports both coenzyme Q biosynthesis, by stabilizing its components, such as COQ5, and NADH:ubiquinone oxidoreductase complex (complex I, MT-ND1) assembly, by stabilizing complex I assembly factors, such as NDUFAF5. This chain is Protein preY, mitochondrial (Pyurf), found in Rattus norvegicus (Rat).